Reading from the N-terminus, the 79-residue chain is uncharacterized protein (79 aa).

The segment at 20–52 is disordered; that stretch reads TERGAGLSPAAPPDPSPAIAPTMAEGGVPSPGP.

This is an uncharacterized protein from Homo sapiens (Human).